The primary structure comprises 378 residues: Ret finger protein-like 2 (378 aa).

An RING-type; degenerate zinc finger spans residues 101–143 (CPVCSDYLEKPMSLECGCAVCLKCINSLQKEPHGEDLLCCCSS). A B30.2/SPRY domain is found at 168-362 (EPKLKKILQM…DQGVLSICPL (195 aa)).

As to expression, seems to be expressed in prostate and less abundantly in adult brain, fetal liver, and fetal kidney.

The sequence is that of Ret finger protein-like 2 (RFPL2) from Homo sapiens (Human).